Consider the following 247-residue polypeptide: NAD(P)H-quinone oxidoreductase subunit K (247 aa).

Residues Cys-63, Cys-64, Cys-128, and Cys-159 each coordinate [4Fe-4S] cluster.

It belongs to the complex I 20 kDa subunit family. In terms of assembly, NDH-1 can be composed of about 15 different subunits; different subcomplexes with different compositions have been identified which probably have different functions. [4Fe-4S] cluster serves as cofactor.

Its subcellular location is the cellular thylakoid membrane. It catalyses the reaction a plastoquinone + NADH + (n+1) H(+)(in) = a plastoquinol + NAD(+) + n H(+)(out). The catalysed reaction is a plastoquinone + NADPH + (n+1) H(+)(in) = a plastoquinol + NADP(+) + n H(+)(out). NDH-1 shuttles electrons from an unknown electron donor, via FMN and iron-sulfur (Fe-S) centers, to quinones in the respiratory and/or the photosynthetic chain. The immediate electron acceptor for the enzyme in this species is believed to be plastoquinone. Couples the redox reaction to proton translocation, and thus conserves the redox energy in a proton gradient. Cyanobacterial NDH-1 also plays a role in inorganic carbon-concentration. This is NAD(P)H-quinone oxidoreductase subunit K from Microcystis aeruginosa (strain NIES-843 / IAM M-2473).